The following is a 198-amino-acid chain: Dynactin subunit 5 (198 aa).

Polar residues predominate over residues 179–188; the sequence is NTPASKGLPS. Residues 179-198 are disordered; it reads NTPASKGLPSTPTKLQTTTT. Low complexity predominate over residues 189 to 198; that stretch reads TPTKLQTTTT.

It belongs to the dynactin subunits 5/6 family. Dynactin subunit 5 subfamily. As to quaternary structure, member of the pointed-end complex of the dynactin shoulder complex.

It is found in the cytoplasm. It localises to the cytoskeleton. In Dictyostelium discoideum (Social amoeba), this protein is Dynactin subunit 5 (dynE).